We begin with the raw amino-acid sequence, 198 residues long: Recombination protein RecR (198 aa).

Residues 56 to 71 form a C4-type zinc finger; sequence CEICGNVSEQATCSIC. One can recognise a Toprim domain in the interval 79-174; the sequence is ALICVVEEAK…RVTRLASGLP (96 aa).

This sequence belongs to the RecR family.

May play a role in DNA repair. It seems to be involved in an RecBC-independent recombinational process of DNA repair. It may act with RecF and RecO. The polypeptide is Recombination protein RecR (Leifsonia xyli subsp. xyli (strain CTCB07)).